A 360-amino-acid chain; its full sequence is Phenylalanine--tRNA ligase alpha subunit (360 aa).

Residue E260 coordinates Mg(2+).

Belongs to the class-II aminoacyl-tRNA synthetase family. Phe-tRNA synthetase alpha subunit type 1 subfamily. As to quaternary structure, tetramer of two alpha and two beta subunits. Requires Mg(2+) as cofactor.

Its subcellular location is the cytoplasm. The enzyme catalyses tRNA(Phe) + L-phenylalanine + ATP = L-phenylalanyl-tRNA(Phe) + AMP + diphosphate + H(+). This Rhizobium johnstonii (strain DSM 114642 / LMG 32736 / 3841) (Rhizobium leguminosarum bv. viciae) protein is Phenylalanine--tRNA ligase alpha subunit.